The chain runs to 186 residues: Ribosome-recycling factor (186 aa).

Belongs to the RRF family.

Its subcellular location is the cytoplasm. Its function is as follows. Responsible for the release of ribosomes from messenger RNA at the termination of protein biosynthesis. May increase the efficiency of translation by recycling ribosomes from one round of translation to another. The chain is Ribosome-recycling factor from Nitratidesulfovibrio vulgaris (strain DP4) (Desulfovibrio vulgaris).